A 434-amino-acid polypeptide reads, in one-letter code: Forkhead box protein A2-A (434 aa).

A DNA-binding region (fork-head) is located at residues Lys149–Lys243. Over residues Lys249 to Ser262 the composition is skewed to basic and acidic residues. 2 disordered regions span residues Lys249–Leu339 and Ser408–Ser434. Composition is skewed to low complexity over residues Glu263 to Pro291 and Ala317 to His333. Residues Ser408–Tyr422 are compositionally biased toward polar residues.

At gastrula stage, expressed in both the anterior and posterior endoderm, with endodermal expression persisting into early tailbud stages. Expression is absent in gastrula stage ectoderm. During tailbud stages, expressed in the pharyngeal region, the neural floor plate, the midbrain, hindbrain and in cranial neural crest cells. Expressed in the foregut of hatching larvae. In tadpoles, expressed in the pharyngeal pouches and in other anterior endodermal regions. Within the tadpole nervous system, expressed in the neural floor plate, at high levels in the ventral midbrain and hindbrain, and at lower levels in the spinal cord. Expressed in the adult lung and brain.

The protein localises to the nucleus. In terms of biological role, acts as a transcriptional activator during early development, limiting the extent of mesoderm formation in the gastrula. Binds to DNA via the target sequence 5'-GT[AC]AACA-3', with 5'-GTAAACA-3' being the preferred binding site. This chain is Forkhead box protein A2-A (foxa2-a), found in Xenopus laevis (African clawed frog).